Reading from the N-terminus, the 819-residue chain is Lon protease (819 aa).

The segment covering 1–14 (MNSTNNTDSQNLDP) has biased composition (polar residues). The interval 1–40 (MNSTNNTDSQNLDPNASEVEKLLDESAEAEEKVDDHTPPS) is disordered. Residues 18–38 (EVEKLLDESAEAEEKVDDHTP) are compositionally biased toward basic and acidic residues. In terms of domain architecture, Lon N-terminal spans 42-239 (LFILPLNKRP…KALVLLKKEL (198 aa)). Position 392–399 (392–399 (GPPGVGKT)) interacts with ATP. The 185-residue stretch at 634–818 (KTPVGVATGL…DDVFKIAFPG (185 aa)) folds into the Lon proteolytic domain. Active-site residues include Ser724 and Lys767.

Belongs to the peptidase S16 family. Homohexamer. Organized in a ring with a central cavity.

The protein resides in the cytoplasm. The catalysed reaction is Hydrolysis of proteins in presence of ATP.. ATP-dependent serine protease that mediates the selective degradation of mutant and abnormal proteins as well as certain short-lived regulatory proteins. Required for cellular homeostasis and for survival from DNA damage and developmental changes induced by stress. Degrades polypeptides processively to yield small peptide fragments that are 5 to 10 amino acids long. Binds to DNA in a double-stranded, site-specific manner. In Chlamydia trachomatis serovar D (strain ATCC VR-885 / DSM 19411 / UW-3/Cx), this protein is Lon protease.